Reading from the N-terminus, the 102-residue chain is Small ribosomal subunit protein eS24 (102 aa).

The protein belongs to the eukaryotic ribosomal protein eS24 family.

The polypeptide is Small ribosomal subunit protein eS24 (Methanobrevibacter smithii (strain ATCC 35061 / DSM 861 / OCM 144 / PS)).